A 633-amino-acid chain; its full sequence is Threonine--tRNA ligase (633 aa).

A TGS domain is found at 1-59; it reads MIRITFSAEQKVKEYSGKVTGFDILQPDVLKEAIAFKVNGELHDLSREIEADAEIEVIQ. Positions 240-532 are catalytic; it reads DHRKIAKDMD…LIENYAGKFP (293 aa). Positions 332, 383, and 509 each coordinate Zn(2+).

It belongs to the class-II aminoacyl-tRNA synthetase family. As to quaternary structure, homodimer. It depends on Zn(2+) as a cofactor.

Its subcellular location is the cytoplasm. The catalysed reaction is tRNA(Thr) + L-threonine + ATP = L-threonyl-tRNA(Thr) + AMP + diphosphate + H(+). Functionally, catalyzes the attachment of threonine to tRNA(Thr) in a two-step reaction: L-threonine is first activated by ATP to form Thr-AMP and then transferred to the acceptor end of tRNA(Thr). Also edits incorrectly charged L-seryl-tRNA(Thr). The chain is Threonine--tRNA ligase from Wolbachia sp. subsp. Drosophila simulans (strain wRi).